Reading from the N-terminus, the 535-residue chain is 5,6-dihydroxyindole-2-carboxylic acid oxidase (535 aa).

Positions 1 to 23 (MQLPMLLLVSLPLLLNMFKPAEA) are cleaved as a signal peptide. The Lumenal, melanosome portion of the chain corresponds to 24–478 (QFPRQCATIE…GPLRVTEMIT (455 aa)). 5 disulfide bridges follow: Cys-29–Cys-40, Cys-41–Cys-64, Cys-55–Cys-98, Cys-100–Cys-109, and Cys-112–Cys-121. 2 N-linked (GlcNAc...) asparagine glycosylation sites follow: Asn-95 and Asn-103. Residue Asn-180 is glycosylated (N-linked (GlcNAc...) asparagine). Residues His-191, His-214, and His-223 each contribute to the Zn(2+) site. Intrachain disulfides connect Cys-257-Cys-260 and Cys-289-Cys-302. 2 N-linked (GlcNAc...) asparagine glycosylation sites follow: Asn-303 and Asn-349. Zn(2+) is bound by residues His-376 and His-380. Asn-384 is a glycosylation site (N-linked (GlcNAc...) asparagine). Zn(2+) is bound at residue His-403. A helical transmembrane segment spans residues 479-499 (IAIVTALVLVAIIFAAAACIV). Topologically, residues 500-535 (RAKKNRDELHQPLLTDQYQHYSDDYDGIATPSQSVV) are cytoplasmic.

Belongs to the tyrosinase family. Tyrosinase, TYRP1 and TYRP2 may form a multienzyme complex. Cu(2+) serves as cofactor. Requires Zn(2+) as cofactor.

The protein resides in the melanosome membrane. The catalysed reaction is 2 5,6-dihydroxyindole-2-carboxylate + O2 = 2 indole-5,6-quinone-2-carboxylate + 2 H2O. The protein operates within pigment biosynthesis; melanin biosynthesis. In terms of biological role, plays a role in melanin biosynthesis. Catalyzes the oxidation of 5,6-dihydroxyindole-2-carboxylic acid (DHICA) into indole-5,6-quinone-2-carboxylic acid. May regulate or influence the type of melanin synthesized. Also to a lower extent, capable of hydroxylating tyrosine and producing melanin. The chain is 5,6-dihydroxyindole-2-carboxylic acid oxidase (TYRP1) from Gallus gallus (Chicken).